A 412-amino-acid polypeptide reads, in one-letter code: Heat stress transcription factor A-3 (412 aa).

A DNA-binding region spans residues 53–147; the sequence is IPPFLSKTFD…LLKNIHRRRS (95 aa). A disordered region spans residues 144–170; that stretch reads RRRSPQSNQTCCSSTSQSQGSPTEVGG. Over residues 148–166 the composition is skewed to low complexity; sequence PQSNQTCCSSTSQSQGSPT. The interval 159–225 is hydrophobic repeat HR-A/B; it reads SQSQGSPTEV…QLLSFLAKLF (67 aa). The stretch at 166–224 forms a coiled coil; sequence TEVGGEIEKLRKERRALMEEMVELQQQSRGTARHVDTVNQRLKAAEQRQKQLLSFLAKL. The Bipartite nuclear localization signal motif lies at 238 to 254; it reads KGKEKGGALGLEKARKK. The AHA1 motif lies at 277–286; it reads DDWERLLMYD. The AHA2 motif lies at 381 to 390; sequence DVCWEQFAAG.

This sequence belongs to the HSF family. Class A subfamily. In terms of assembly, homotrimer. Post-translationally, exhibits temperature-dependent phosphorylation.

Its subcellular location is the nucleus. Transcriptional activator that specifically binds DNA sequence 5'-AGAAnnTTCT-3' known as heat shock promoter elements (HSE). Involved in heat stress response. Activated by DREB2A under heat stress. The sequence is that of Heat stress transcription factor A-3 (HSFA3) from Arabidopsis thaliana (Mouse-ear cress).